We begin with the raw amino-acid sequence, 505 residues long: Maturase K (505 aa).

The protein belongs to the intron maturase 2 family. MatK subfamily.

Its subcellular location is the plastid. It localises to the chloroplast. Usually encoded in the trnK tRNA gene intron. Probably assists in splicing its own and other chloroplast group II introns. The polypeptide is Maturase K (Gomphrena pulchella (Globe amaranth)).